The sequence spans 197 residues: Recombination protein RecR (197 aa).

Residues 56 to 71 form a C4-type zinc finger; the sequence is CSRCFNLSAEDPCDIC. Residues 79 to 174 form the Toprim domain; it reads ETICVVAEPR…RVTRIAFGLP (96 aa).

This sequence belongs to the RecR family.

Its function is as follows. May play a role in DNA repair. It seems to be involved in an RecBC-independent recombinational process of DNA repair. It may act with RecF and RecO. This Gloeobacter violaceus (strain ATCC 29082 / PCC 7421) protein is Recombination protein RecR.